We begin with the raw amino-acid sequence, 305 residues long: Homoserine O-acetyltransferase (305 aa).

C142 functions as the Acyl-thioester intermediate in the catalytic mechanism. Residues K163 and S192 each coordinate substrate. The active-site Proton acceptor is the H235. Residue E237 is part of the active site. R249 contributes to the substrate binding site.

This sequence belongs to the MetA family.

Its subcellular location is the cytoplasm. It catalyses the reaction L-homoserine + acetyl-CoA = O-acetyl-L-homoserine + CoA. Its pathway is amino-acid biosynthesis; L-methionine biosynthesis via de novo pathway; O-acetyl-L-homoserine from L-homoserine: step 1/1. Its function is as follows. Transfers an acetyl group from acetyl-CoA to L-homoserine, forming acetyl-L-homoserine. The polypeptide is Homoserine O-acetyltransferase (Bacteroides thetaiotaomicron (strain ATCC 29148 / DSM 2079 / JCM 5827 / CCUG 10774 / NCTC 10582 / VPI-5482 / E50)).